We begin with the raw amino-acid sequence, 436 residues long: GTPase Der (436 aa).

2 consecutive EngA-type G domains span residues 4–167 (PVIA…PKIE) and 176–351 (IRFS…ESHS). Residues 10-17 (GRPNVGKS), 57-61 (DTGGI), 119-122 (NKVD), 182-189 (GRPNVGKS), 229-233 (DTAGM), and 294-297 (NKWD) each bind GTP. The KH-like domain occupies 352-436 (IRIQTNVLND…PIHIIARARD (85 aa)).

It belongs to the TRAFAC class TrmE-Era-EngA-EngB-Septin-like GTPase superfamily. EngA (Der) GTPase family. Associates with the 50S ribosomal subunit.

Functionally, GTPase that plays an essential role in the late steps of ribosome biogenesis. This Bacillus cereus (strain ATCC 10987 / NRS 248) protein is GTPase Der.